The following is a 31-amino-acid chain: Cytochrome b6-f complex subunit 6 (31 aa).

Residues 4–26 (ITSYFGFLLAALTITPALLISLN) form a helical membrane-spanning segment.

It belongs to the PetL family. As to quaternary structure, the 4 large subunits of the cytochrome b6-f complex are cytochrome b6, subunit IV (17 kDa polypeptide, PetD), cytochrome f and the Rieske protein, while the 4 small subunits are PetG, PetL, PetM and PetN. The complex functions as a dimer.

The protein localises to the plastid. It localises to the chloroplast thylakoid membrane. Component of the cytochrome b6-f complex, which mediates electron transfer between photosystem II (PSII) and photosystem I (PSI), cyclic electron flow around PSI, and state transitions. PetL is important for photoautotrophic growth as well as for electron transfer efficiency and stability of the cytochrome b6-f complex. The chain is Cytochrome b6-f complex subunit 6 from Dioscorea elephantipes (Elephant's foot yam).